Reading from the N-terminus, the 86-residue chain is Apolipoprotein C-I (86 aa).

The signal sequence occupies residues methionine 1–glycine 26.

It belongs to the apolipoprotein C1 family.

Its subcellular location is the secreted. In terms of biological role, inhibitor of lipoprotein binding to the low density lipoprotein (LDL) receptor, LDL receptor-related protein, and very low density lipoprotein (VLDL) receptor. Associates with high density lipoproteins (HDL) and the triacylglycerol-rich lipoproteins in the plasma and makes up about 10% of the protein of the VLDL and 2% of that of HDL. Appears to interfere directly with fatty acid uptake and is also the major plasma inhibitor of cholesteryl ester transfer protein (CETP). Binds free fatty acids and reduces their intracellular esterification. Modulates the interaction of APOE with beta-migrating VLDL and inhibits binding of beta-VLDL to the LDL receptor-related protein. This is Apolipoprotein C-I (APOC1) from Ateles geoffroyi (Black-handed spider monkey).